The primary structure comprises 105 residues: Small ribosomal subunit protein uS10 (105 aa).

Belongs to the universal ribosomal protein uS10 family. As to quaternary structure, part of the 30S ribosomal subunit.

Involved in the binding of tRNA to the ribosomes. The chain is Small ribosomal subunit protein uS10 from Rickettsia canadensis (strain McKiel).